The primary structure comprises 105 residues: uncharacterized protein (105 aa).

Residues Phe-8 to Ser-28 form a helical membrane-spanning segment. Residues Asp-32 to Ser-53 form a disordered region. Residues Val-72–Phe-92 traverse the membrane as a helical segment.

This sequence to M.jannaschii MJ1570.

Its subcellular location is the cell membrane. This is an uncharacterized protein from Methanothermobacter thermautotrophicus (strain ATCC 29096 / DSM 1053 / JCM 10044 / NBRC 100330 / Delta H) (Methanobacterium thermoautotrophicum).